Here is a 405-residue protein sequence, read N- to C-terminus: Multidrug resistance protein MdtH (405 aa).

12 helical membrane-spanning segments follow: residues 13 to 33 (YFLL…FPLI), 34 to 54 (SIRF…ALGL), 78 to 95 (MIIA…LMGI), 99 to 116 (PWLL…GTLF), 139 to 159 (LLMM…SWLL), 165 to 185 (LVCL…AWLL), 213 to 233 (YVLT…MLPI), 243 to 263 (AAVK…LYPI), 277 to 297 (LMAG…IEDL), 299 to 319 (ALFM…PARE), 340 to 360 (LGLA…YDVG), and 365 to 385 (IPQL…LGLY).

It belongs to the major facilitator superfamily. DHA1 family. MdtH (TC 2.A.1.2.21) subfamily.

The protein localises to the cell inner membrane. The sequence is that of Multidrug resistance protein MdtH from Sodalis glossinidius (strain morsitans).